The primary structure comprises 324 residues: uncharacterized protein (324 aa).

It to the C-terminal of para-aminobenzoate synthase component I.

This is an uncharacterized protein from Pasteurella multocida (strain Pm70).